A 907-amino-acid chain; its full sequence is DNA mismatch repair protein MutS (907 aa).

ATP is bound at residue 656–663 (GPNMAGKS).

This sequence belongs to the DNA mismatch repair MutS family.

Its function is as follows. This protein is involved in the repair of mismatches in DNA. It is possible that it carries out the mismatch recognition step. This protein has a weak ATPase activity. The polypeptide is DNA mismatch repair protein MutS (Nitrobacter hamburgensis (strain DSM 10229 / NCIMB 13809 / X14)).